Here is a 227-residue protein sequence, read N- to C-terminus: Cytochrome c oxidase subunit 2 (227 aa).

At methionine 1–serine 14 the chain is on the mitochondrial intermembrane side. The chain crosses the membrane as a helical span at residues proline 15–threonine 45. The Mitochondrial matrix portion of the chain corresponds to leucine 46 to glutamine 59. A helical transmembrane segment spans residues glutamate 60–threonine 87. Residues aspartate 88 to leucine 227 are Mitochondrial intermembrane-facing. The Cu cation site is built by histidine 161, cysteine 196, glutamate 198, cysteine 200, histidine 204, and methionine 207. Mg(2+) is bound at residue glutamate 198.

This sequence belongs to the cytochrome c oxidase subunit 2 family. In terms of assembly, component of the cytochrome c oxidase (complex IV, CIV), a multisubunit enzyme composed of 14 subunits. The complex is composed of a catalytic core of 3 subunits MT-CO1, MT-CO2 and MT-CO3, encoded in the mitochondrial DNA, and 11 supernumerary subunits COX4I, COX5A, COX5B, COX6A, COX6B, COX6C, COX7A, COX7B, COX7C, COX8 and NDUFA4, which are encoded in the nuclear genome. The complex exists as a monomer or a dimer and forms supercomplexes (SCs) in the inner mitochondrial membrane with NADH-ubiquinone oxidoreductase (complex I, CI) and ubiquinol-cytochrome c oxidoreductase (cytochrome b-c1 complex, complex III, CIII), resulting in different assemblies (supercomplex SCI(1)III(2)IV(1) and megacomplex MCI(2)III(2)IV(2)). Found in a complex with TMEM177, COA6, COX18, COX20, SCO1 and SCO2. Interacts with TMEM177 in a COX20-dependent manner. Interacts with COX20. Interacts with COX16. The cofactor is Cu cation.

It localises to the mitochondrion inner membrane. The enzyme catalyses 4 Fe(II)-[cytochrome c] + O2 + 8 H(+)(in) = 4 Fe(III)-[cytochrome c] + 2 H2O + 4 H(+)(out). Its function is as follows. Component of the cytochrome c oxidase, the last enzyme in the mitochondrial electron transport chain which drives oxidative phosphorylation. The respiratory chain contains 3 multisubunit complexes succinate dehydrogenase (complex II, CII), ubiquinol-cytochrome c oxidoreductase (cytochrome b-c1 complex, complex III, CIII) and cytochrome c oxidase (complex IV, CIV), that cooperate to transfer electrons derived from NADH and succinate to molecular oxygen, creating an electrochemical gradient over the inner membrane that drives transmembrane transport and the ATP synthase. Cytochrome c oxidase is the component of the respiratory chain that catalyzes the reduction of oxygen to water. Electrons originating from reduced cytochrome c in the intermembrane space (IMS) are transferred via the dinuclear copper A center (CU(A)) of subunit 2 and heme A of subunit 1 to the active site in subunit 1, a binuclear center (BNC) formed by heme A3 and copper B (CU(B)). The BNC reduces molecular oxygen to 2 water molecules using 4 electrons from cytochrome c in the IMS and 4 protons from the mitochondrial matrix. In Pan troglodytes (Chimpanzee), this protein is Cytochrome c oxidase subunit 2 (MT-CO2).